Here is a 263-residue protein sequence, read N- to C-terminus: UPF0246 protein Mmar10_0828 (263 aa).

Belongs to the UPF0246 family.

The chain is UPF0246 protein Mmar10_0828 from Maricaulis maris (strain MCS10) (Caulobacter maris).